Reading from the N-terminus, the 194-residue chain is Peptidyl-tRNA hydrolase (194 aa).

Tyr-17 is a tRNA binding site. Catalysis depends on His-22, which acts as the Proton acceptor. Tyr-68, Asn-70, and Asn-116 together coordinate tRNA.

Belongs to the PTH family. As to quaternary structure, monomer.

It is found in the cytoplasm. The enzyme catalyses an N-acyl-L-alpha-aminoacyl-tRNA + H2O = an N-acyl-L-amino acid + a tRNA + H(+). Functionally, hydrolyzes ribosome-free peptidyl-tRNAs (with 1 or more amino acids incorporated), which drop off the ribosome during protein synthesis, or as a result of ribosome stalling. Catalyzes the release of premature peptidyl moieties from peptidyl-tRNA molecules trapped in stalled 50S ribosomal subunits, and thus maintains levels of free tRNAs and 50S ribosomes. The protein is Peptidyl-tRNA hydrolase of Pseudomonas aeruginosa (strain LESB58).